Reading from the N-terminus, the 318-residue chain is Acetyl-coenzyme A carboxylase carboxyl transferase subunit alpha (318 aa).

A CoA carboxyltransferase C-terminal domain is found at 38–292 (ALDRKAEEML…GEAIAAMLGE (255 aa)).

The protein belongs to the AccA family. In terms of assembly, acetyl-CoA carboxylase is a heterohexamer composed of biotin carboxyl carrier protein (AccB), biotin carboxylase (AccC) and two subunits each of ACCase subunit alpha (AccA) and ACCase subunit beta (AccD).

The protein resides in the cytoplasm. The catalysed reaction is N(6)-carboxybiotinyl-L-lysyl-[protein] + acetyl-CoA = N(6)-biotinyl-L-lysyl-[protein] + malonyl-CoA. It functions in the pathway lipid metabolism; malonyl-CoA biosynthesis; malonyl-CoA from acetyl-CoA: step 1/1. Component of the acetyl coenzyme A carboxylase (ACC) complex. First, biotin carboxylase catalyzes the carboxylation of biotin on its carrier protein (BCCP) and then the CO(2) group is transferred by the carboxyltransferase to acetyl-CoA to form malonyl-CoA. This is Acetyl-coenzyme A carboxylase carboxyl transferase subunit alpha from Paracoccus denitrificans (strain Pd 1222).